Here is a 416-residue protein sequence, read N- to C-terminus: MSKADLIVGLQWGDEGKGKIVDHMAQTHDYVCRFAGGHNAGHTIVIGDKTYALHLIPSGVLNPKAKNVVGNGVVLSPKDFIKEMEQFDNLEGRLFLSDKAHILLPYHADIDQARERMKGDKAIGTTGKGIGPAYGDKVARVGHRLGELLHPEKLASKIIAFFEMNKPVFDAMGVEMPETVALLEELEGYRKVLAPYICDTTQLMWKIIDEDKRILLEGAQGTMLDIDHGTYPYVTSSTTVSAGACSGLGLNPKDIGKVTGIAKAYCTRVGNGPFPSEDMGKEGDRLRENGHEFGTTTGRPRRCGWFDAVAMRHAVRVNGVDQVALMKLDVLDGFDEIKVCVAYEFEGKEIDYVPYDLEDVKPIYKSFPGWEKTEGAREFDALPETAKSYILALEEMIGTKMGIISTSPEREDTIIR.

GTP is bound by residues 13-19 (GDEGKGK) and 41-43 (GHT). Asp-14 functions as the Proton acceptor in the catalytic mechanism. Mg(2+) contacts are provided by Asp-14 and Gly-41. Residues 14 to 17 (DEGK), 39 to 42 (NAGH), Thr-126, Arg-140, Gln-220, Thr-235, and Arg-299 contribute to the IMP site. His-42 functions as the Proton donor in the catalytic mechanism. 295-301 (TTTGRPR) is a binding site for substrate. GTP-binding positions include Arg-301, 327 to 329 (KLD), and 405 to 407 (STS).

The protein belongs to the adenylosuccinate synthetase family. Homodimer. Mg(2+) is required as a cofactor.

It localises to the cytoplasm. The catalysed reaction is IMP + L-aspartate + GTP = N(6)-(1,2-dicarboxyethyl)-AMP + GDP + phosphate + 2 H(+). The protein operates within purine metabolism; AMP biosynthesis via de novo pathway; AMP from IMP: step 1/2. In terms of biological role, plays an important role in the de novo pathway of purine nucleotide biosynthesis. Catalyzes the first committed step in the biosynthesis of AMP from IMP. This Sulfurovum sp. (strain NBC37-1) protein is Adenylosuccinate synthetase.